The following is a 170-amino-acid chain: Adenine phosphoribosyltransferase (170 aa).

Belongs to the purine/pyrimidine phosphoribosyltransferase family. As to quaternary structure, homodimer.

The protein resides in the cytoplasm. The enzyme catalyses AMP + diphosphate = 5-phospho-alpha-D-ribose 1-diphosphate + adenine. It functions in the pathway purine metabolism; AMP biosynthesis via salvage pathway; AMP from adenine: step 1/1. Functionally, catalyzes a salvage reaction resulting in the formation of AMP, that is energically less costly than de novo synthesis. The sequence is that of Adenine phosphoribosyltransferase from Thermotoga sp. (strain RQ2).